The primary structure comprises 248 residues: Probable transcriptional regulatory protein PSPTO_3980 (248 aa).

Belongs to the TACO1 family.

The protein localises to the cytoplasm. The sequence is that of Probable transcriptional regulatory protein PSPTO_3980 from Pseudomonas syringae pv. tomato (strain ATCC BAA-871 / DC3000).